Reading from the N-terminus, the 469-residue chain is Glutamine synthetase (469 aa).

The GS beta-grasp domain occupies Glu-15–Thr-96. Positions Pro-104 to Val-469 constitute a GS catalytic domain. Residues Glu-129 and Glu-131 each coordinate Mg(2+). Glu-205 is an ATP binding site. Residues Glu-210 and Glu-218 each coordinate Mg(2+). Position 221–223 (Tyr-221–Phe-223) interacts with ATP. Residues Asn-262 to Gly-263 and Gly-263 contribute to the L-glutamate site. A Mg(2+)-binding site is contributed by His-267. ATP contacts are provided by residues His-269–Ser-271 and Ser-271. 3 residues coordinate L-glutamate: Arg-320, Glu-326, and Arg-338. ATP is bound by residues Arg-338, Arg-343, and Lys-352. Residue Glu-357 participates in Mg(2+) binding. An L-glutamate-binding site is contributed by Arg-359. The residue at position 397 (Tyr-397) is an O-AMP-tyrosine.

Belongs to the glutamine synthetase family. Oligomer of 12 subunits arranged in the form of two hexagons. Mg(2+) is required as a cofactor.

Its subcellular location is the cytoplasm. It carries out the reaction L-glutamate + NH4(+) + ATP = L-glutamine + ADP + phosphate + H(+). With respect to regulation, the activity of this enzyme could be controlled by adenylation under conditions of abundant glutamine. Its function is as follows. Catalyzes the ATP-dependent biosynthesis of glutamine from glutamate and ammonia. The protein is Glutamine synthetase of Streptomyces viridochromogenes.